A 536-amino-acid polypeptide reads, in one-letter code: Glucan 1,6-alpha-glucosidase (536 aa).

Asp194 functions as the Nucleophile in the catalytic mechanism. The Proton donor role is filled by Glu236.

It belongs to the glycosyl hydrolase 13 family.

The protein localises to the cytoplasm. It catalyses the reaction Hydrolysis of (1-&gt;6)-alpha-D-glucosidic linkages in (1-&gt;6)-alpha-D-glucans and derived oligosaccharides.. The physiological substrates may be short isomaltosaccharides. The polypeptide is Glucan 1,6-alpha-glucosidase (dexB) (Streptococcus mutans serotype c (strain ATCC 700610 / UA159)).